The sequence spans 262 residues: Apolipoprotein A-I (262 aa).

The first 18 residues, 1–18 (MKAVVLTLAVLFLTGSQA), serve as a signal peptide directing secretion. Tandem repeats lie at residues 67-88 (LKLL…EQLG) and 89-110 (PVTQ…QEMN). Residues 67–262 (LKLLDNWDTL…DEASKKLNAQ (196 aa)) are 10 X approximate tandem repeats. At Met-109 the chain carries Methionine sulfoxide. One copy of the 3; half-length repeat lies at 111-121 (KDLEEVKQKVQ). 5 tandem repeats follow at residues 122-142 (PYLD…RQKV), 144-165 (PLGE…DRLS), 166-184 (PLAQ…KQLA), 185-206 (PYSD…EGGG), and 207-227 (SLAE…EKAK). Residues 228–238 (PALEDLRQGLM) form a 9; half-length repeat. Met-238 is modified (methionine sulfoxide). Residues 239–262 (PVLESLKVSILAAIDEASKKLNAQ) form repeat 10.

This sequence belongs to the apolipoprotein A1/A4/E family. In terms of assembly, homodimer. Interacts with APOA1BP and CLU. Component of a sperm activating protein complex (SPAP), consisting of APOA1, an immunoglobulin heavy chain, an immunoglobulin light chain and albumin. Interacts with NDRG1. Interacts with SCGB3A2. Interacts with NAXE and YJEFN3. In terms of processing, glycosylated. Post-translationally, palmitoylated. Phosphorylation sites are present in the extracellular medium. As to expression, major protein of plasma HDL, also found in chylomicrons.

Its subcellular location is the secreted. Its function is as follows. Participates in the reverse transport of cholesterol from tissues to the liver for excretion by promoting cholesterol efflux from tissues and by acting as a cofactor for the lecithin cholesterol acyltransferase (LCAT). As part of the SPAP complex, activates spermatozoa motility. This chain is Apolipoprotein A-I (APOA1), found in Pantholops hodgsonii (Chiru).